Here is a 313-residue protein sequence, read N- to C-terminus: Porphobilinogen deaminase (313 aa).

Cys-242 carries the S-(dipyrrolylmethanemethyl)cysteine modification.

It belongs to the HMBS family. In terms of assembly, monomer. The cofactor is dipyrromethane.

It carries out the reaction 4 porphobilinogen + H2O = hydroxymethylbilane + 4 NH4(+). It functions in the pathway porphyrin-containing compound metabolism; protoporphyrin-IX biosynthesis; coproporphyrinogen-III from 5-aminolevulinate: step 2/4. In terms of biological role, tetrapolymerization of the monopyrrole PBG into the hydroxymethylbilane pre-uroporphyrinogen in several discrete steps. This is Porphobilinogen deaminase from Pseudomonas entomophila (strain L48).